We begin with the raw amino-acid sequence, 524 residues long: Glutamyl-tRNA(Gln) amidotransferase subunit A (524 aa).

Active-site charge relay system residues include K109 and S184. The Acyl-ester intermediate role is filled by S208.

The protein belongs to the amidase family. GatA subfamily. In terms of assembly, heterotrimer of A, B and C subunits.

It catalyses the reaction L-glutamyl-tRNA(Gln) + L-glutamine + ATP + H2O = L-glutaminyl-tRNA(Gln) + L-glutamate + ADP + phosphate + H(+). Allows the formation of correctly charged Gln-tRNA(Gln) through the transamidation of misacylated Glu-tRNA(Gln) in organisms which lack glutaminyl-tRNA synthetase. The reaction takes place in the presence of glutamine and ATP through an activated gamma-phospho-Glu-tRNA(Gln). In Tropheryma whipplei (strain Twist) (Whipple's bacillus), this protein is Glutamyl-tRNA(Gln) amidotransferase subunit A.